We begin with the raw amino-acid sequence, 1209 residues long: Nitric oxide synthase (1209 aa).

Residue Ser-103 participates in (6R)-L-erythro-5,6,7,8-tetrahydrobiopterin binding. Position 181 (Cys-181) interacts with heme b. The L-arginine site is built by Gln-244, Trp-353, Tyr-354, Glu-358, and Asn-363. (6R)-L-erythro-5,6,7,8-tetrahydrobiopterin is bound by residues Trp-444 and Phe-457. Tyr-472 serves as a coordination point for heme b. Positions 491–511 (VHRKFHFKQIARAVKFTSKLF) are calmodulin-binding. Residues 521-723 (ATILYATETG…QFRAWSSKIF (203 aa)) enclose the Flavodoxin-like domain. 527-531 (TETGK) lines the FMN pocket. The disordered stretch occupies residues 603–622 (RGDGTSDLGSGTFKTPTPKS). Residue 669 to 700 (VFGLGSSAYPKFCHFGKTVDKILGDLGGERIL) participates in FMN binding. The FAD-binding FR-type domain occupies 776 to 1021 (KQLITCKVKE…IRRAPSFHMP (246 aa)). Residues 811–822 (YDPGDHVGVLAC) and 954–964 (LQPRFYSISSS) contribute to the FAD site. NADP(+)-binding positions include 1028–1147 (LILV…QQKL) and 1128–1143 (NGHF…AEEV).

Belongs to the NOS family. Heme b is required as a cofactor. Requires FAD as cofactor. It depends on FMN as a cofactor. As to expression, constitutively expressed at a low level in the larval fat body, hemocyte, Malpighian tubule, midgut, silk gland and adult antenna.

The enzyme catalyses 2 L-arginine + 3 NADPH + 4 O2 + H(+) = 2 L-citrulline + 2 nitric oxide + 3 NADP(+) + 4 H2O. With respect to regulation, expression is dependent on and stimulated by NADPH, calcium, BH4 and calmodulin. The activity is not dependent on FAD and is not stimulated by its presence. Produces nitric oxide (NO) which is a messenger molecule with diverse functions throughout the body. Involved in the induction of immune gene expression. The polypeptide is Nitric oxide synthase (Bombyx mori (Silk moth)).